Consider the following 932-residue polypeptide: Myelin gene regulatory factor-like A (932 aa).

2 stretches are compositionally biased toward low complexity: residues 1 to 19 (MDGYNQQQQQQQQQQQQHQ) and 33 to 48 (QQQQQQQQQQQQQQQQ). Disordered stretches follow at residues 1 to 63 (MDGY…ISNG), 152 to 256 (VNSP…LSSS), 269 to 328 (TNTQ…NENP), 540 to 568 (VTPPGDLSPVHTPDYAGTSSNNGGGSNNM), 582 to 601 (TMNIVSPGHSPTSPRPLSQL), 613 to 660 (TQNH…NNNN), and 680 to 726 (NINN…CHWN). The segment covering 49-59 (PMNGSNNQLLG) has biased composition (polar residues). Residues 127–154 (LDSSFLMLQQQLQDQQQQIAQFNSSVNS) are a coiled coil. Low complexity-rich tracts occupy residues 152-249 (VNSP…ANNT) and 277-294 (PRSISPNPSPNLSPTNSP). The NDT80 DNA-binding region spans 286–546 (PNLSPTNSPI…ATQVTPPGDL (261 aa)). A compositionally biased stretch (polar residues) spans 311–328 (ENENSDPPSPMTQYNENP). 2 stretches are compositionally biased toward low complexity: residues 615–660 (NHNN…NNNN) and 680–721 (NINN…NNNN). The Peptidase S74 domain occupies 767–877 (SDLRIKYDLK…KQMDEMKLKL (111 aa)). Residues 863 to 895 (TQELSKQMDEMKLKLITYESKLKNLKKKSKNQT) adopt a coiled-coil conformation. A helical transmembrane segment spans residues 895 to 915 (TILLIIFMITFLLVALYMYKP).

It is found in the membrane. In terms of biological role, transcription factor which acts as a key regulator of pstA (prestalk-A) cells differentiation. Essential for ecmA-specific gene expression. The chain is Myelin gene regulatory factor-like A (mrfA) from Dictyostelium discoideum (Social amoeba).